Here is a 961-residue protein sequence, read N- to C-terminus: Rho guanine nucleotide exchange factor 2 (961 aa).

The segment at 12-59 adopts a Phorbol-ester/DAG-type zinc-finger fold; that stretch reads GHLFTTISVSGMTMCYACNKSITAKEALICPTCNVTIHNRCKDTLANC. Ser82, Ser95, Ser102, Ser106, Ser110, Ser124, Ser136, Ser145, Ser147, and Ser150 each carry phosphoserine. The segment at 104 to 134 is interaction with DYNLT1; that stretch reads RQSLLGSRRGRSPLSLAKSVSTTNIAGHFND. The DH domain maps to 209–406; it reads KQQDVIYELI…KELLSNVDQD (198 aa). Lys327 is modified (N6-acetyllysine). One can recognise a PH domain in the interval 446 to 545; sequence KLIHDGCLLW…WIRVIQQSVR (100 aa). Positions 561–588 form a coiled coil; that stretch reads EAYLRRIKMELQQKDRALVELLQEKVGL. 2 positions are modified to phosphoserine: Ser619 and Ser622. The residue at position 653 (Thr653) is a Phosphothreonine; by MAPK1 or MAPK3. The tract at residues 659–679 is disordered; sequence LPVETDSGGNTSPGVTANGEA. Residues Ser665, Ser670, Ser685, and Ser756 each carry the phosphoserine modification. Positions 742–761 are enriched in basic and acidic residues; it reads PEGPERREKLTRANSRDGEA. Residues 742–770 are disordered; the sequence is PEGPERREKLTRANSRDGEAGRAGAAPVA. Positions 772–841 form a coiled coil; sequence EKQATELALL…RQLAALGHTE (70 aa). A Phosphoserine; by PAK1 and AURKA modification is found at Ser860. The disordered stretch occupies residues 867 to 961; sequence LYLSFTPPQP…RDGEPVASES (95 aa). The residue at position 868 (Tyr868) is a Phosphotyrosine. Phosphoserine; by PAK4 is present on Ser870. Positions 894 to 913 are enriched in basic and acidic residues; sequence RPFEDRERQELGSPDERLQD. Phosphoserine is present on residues Ser906, Ser914, and Ser915. Over residues 915–925 the composition is skewed to acidic residues; the sequence is SDPDTGSEEEG. Thr919 is subject to Phosphothreonine. Phosphoserine occurs at positions 921, 927, 928, and 931. Ser935 carries the phosphoserine; by CDK1 modification.

In terms of assembly, found in a complex composed at least of ARHGEF2, NOD2 and RIPK2. Interacts with RIPK2; the interaction mediates tyrosine phosphorylation of RIPK2 by Src kinase CSK. Interacts with RIPK1 and RIPK3. Interacts with YWHAZ/14-3-3 zeta; when phosphorylated at Ser-860. Interacts with the kinases PAK4, AURKA and MAPK1. Interacts with RHOA and RAC1. Interacts with NOD1. Interacts (via the N- terminal zinc finger) with CAPN6 (via domain II). Interacts with DYNLT1. In terms of processing, phosphorylation of Ser-860 by PAK1 induces binding to protein YWHAZ, promoting its relocation to microtubules and the inhibition of its activity. Phosphorylated by AURKA and CDK1 during mitosis, which negatively regulates its activity. Phosphorylation by MAPK1 or MAPK3 increases nucleotide exchange activity. Phosphorylation by PAK4 releases GEF-H1 from the microtubules. Phosphorylated on serine, threonine and tyrosine residues in a RIPK2-dependent manner.

The protein localises to the cytoplasm. It is found in the cytoskeleton. Its subcellular location is the cell junction. The protein resides in the tight junction. It localises to the golgi apparatus. The protein localises to the spindle. It is found in the cytoplasmic vesicle. Functionally, activates Rho-GTPases by promoting the exchange of GDP for GTP. May be involved in epithelial barrier permeability, cell motility and polarization, dendritic spine morphology, antigen presentation, leukemic cell differentiation, cell cycle regulation, innate immune response, and cancer. Binds Rac-GTPases, but does not seem to promote nucleotide exchange activity toward Rac-GTPases. May stimulate instead the cortical activity of Rac. Inactive toward CDC42, TC10, or Ras-GTPases. Forms an intracellular sensing system along with NOD1 for the detection of microbial effectors during cell invasion by pathogens. Involved in innate immune signaling transduction pathway promoting cytokine IL6/interleukin-6 and TNF-alpha secretion in macrophage upon stimulation by bacterial peptidoglycans; acts as a signaling intermediate between NOD2 receptor and RIPK2 kinase. Contributes to the tyrosine phosphorylation of RIPK2 through Src tyrosine kinase leading to NF-kappaB activation by NOD2. Overexpression activates Rho-, but not Rac-GTPases, and increases paracellular permeability. Involved in neuronal progenitor cell division and differentiation. Involved in the migration of precerebellar neurons. The sequence is that of Rho guanine nucleotide exchange factor 2 (ARHGEF2) from Sus scrofa (Pig).